The chain runs to 96 residues: Small ribosomal subunit protein bS16 (96 aa).

This sequence belongs to the bacterial ribosomal protein bS16 family.

The polypeptide is Small ribosomal subunit protein bS16 (Oenococcus oeni (strain ATCC BAA-331 / PSU-1)).